The sequence spans 233 residues: UPF0758 protein TTE0897 (233 aa).

The 123-residue stretch at 108 to 230 (SVTSPEDVIN…GISLKEKGYY (123 aa)) folds into the MPN domain. Zn(2+) is bound by residues histidine 179, histidine 181, and aspartate 192. The short motif at 179-192 (HNHPSGDPTPSRED) is the JAMM motif element.

Belongs to the UPF0758 family.

In Caldanaerobacter subterraneus subsp. tengcongensis (strain DSM 15242 / JCM 11007 / NBRC 100824 / MB4) (Thermoanaerobacter tengcongensis), this protein is UPF0758 protein TTE0897.